The sequence spans 159 residues: Phosphopantetheine adenylyltransferase (159 aa).

Thr10 provides a ligand contact to substrate. Residues 10–11 (TF) and His18 each bind ATP. Residues Lys42, Leu74, and Arg88 each coordinate substrate. ATP-binding positions include 89 to 91 (GMR), Glu99, and 124 to 130 (WSYVSST).

Belongs to the bacterial CoaD family. In terms of assembly, homohexamer. Mg(2+) serves as cofactor.

The protein resides in the cytoplasm. The catalysed reaction is (R)-4'-phosphopantetheine + ATP + H(+) = 3'-dephospho-CoA + diphosphate. The protein operates within cofactor biosynthesis; coenzyme A biosynthesis; CoA from (R)-pantothenate: step 4/5. In terms of biological role, reversibly transfers an adenylyl group from ATP to 4'-phosphopantetheine, yielding dephospho-CoA (dPCoA) and pyrophosphate. The sequence is that of Phosphopantetheine adenylyltransferase from Mannheimia succiniciproducens (strain KCTC 0769BP / MBEL55E).